Consider the following 369-residue polypeptide: Glycine oxidase (369 aa).

Residues 14–15 (II), 34–35 (ES), 42–43 (TT), 47–49 (AGM), and V174 contribute to the FAD site. Residues R302 and R329 each coordinate substrate. FAD is bound at residue 327 to 333 (HFRNGIL).

The protein belongs to the DAO family. ThiO subfamily. Homotetramer. FAD is required as a cofactor.

The protein localises to the cytoplasm. The enzyme catalyses glycine + O2 + H2O = glyoxylate + H2O2 + NH4(+). It catalyses the reaction N-ethylglycine + O2 + H2O = ethylamine + glyoxylate + H2O2. It carries out the reaction sarcosine + O2 + H2O = methylamine + glyoxylate + H2O2. The catalysed reaction is D-alanine + O2 + H2O = pyruvate + H2O2 + NH4(+). The enzyme catalyses glyphosate + O2 + H2O = aminomethylphosphonate + glyoxylate + H2O2 + H(+). The protein operates within cofactor biosynthesis; thiamine diphosphate biosynthesis. With respect to regulation, is competitively inhibited by glycolate. Functionally, catalyzes the FAD-dependent oxidative deamination of various amines and D-amino acids to yield the corresponding alpha-keto acids, ammonia/amine, and hydrogen peroxide. Oxidizes sarcosine (N-methylglycine), N-ethylglycine and glycine. Can also oxidize the herbicide glyphosate (N-phosphonomethylglycine). Displays lower activities on D-alanine, D-valine, D-proline and D-methionine. Does not act on L-amino acids and other D-amino acids. Is essential for thiamine biosynthesis since the oxidation of glycine catalyzed by ThiO generates the glycine imine intermediate (dehydroglycine) required for the biosynthesis of the thiazole ring of thiamine pyrophosphate. This is Glycine oxidase from Bacillus subtilis (strain 168).